Here is a 130-residue protein sequence, read N- to C-terminus: Small ribosomal subunit protein uS9 (130 aa).

This sequence belongs to the universal ribosomal protein uS9 family.

The sequence is that of Small ribosomal subunit protein uS9 from Nitratidesulfovibrio vulgaris (strain ATCC 29579 / DSM 644 / CCUG 34227 / NCIMB 8303 / VKM B-1760 / Hildenborough) (Desulfovibrio vulgaris).